The chain runs to 469 residues: Collagenase 3 (469 aa).

A signal peptide spans 1–17 (SSLSVLVLSLSFAYCLS). Residues 18-100 (APVPQDEDSE…QPRCGVPDVG (83 aa)) constitute a propeptide, activation peptide. Positions 92 to 99 (PRCGVPDV) match the Cysteine switch motif. Cys-94 serves as a coordination point for Zn(2+). A glycan (N-linked (GlcNAc...) asparagine) is linked at Asn-115. Ca(2+) is bound at residue Asp-126. Asn-150 carries N-linked (GlcNAc...) asparagine glycosylation. Residue Asp-160 participates in Ca(2+) binding. The Zn(2+) site is built by His-170 and Asp-172. Positions 177, 178, and 182 each coordinate Ca(2+). Zn(2+) is bound at residue His-185. Residues Gly-194 and Asp-196 each contribute to the Ca(2+) site. Residue His-198 coordinates Zn(2+). Residues Asp-200, Asp-201, and Glu-203 each coordinate Ca(2+). Zn(2+) is bound at residue His-220. The active site involves Glu-221. Zn(2+)-binding residues include His-224, His-230, and Met-238. The segment at 266–469 (PGNRDPHPKH…ILKTNFVLMC (204 aa)) is interaction with collagen. Hemopexin repeat units lie at residues 279–328 (PEKC…WPEL), 329–375 (PNKL…GFPK), 377–425 (LKAI…FPGI), and 426–469 (GEKV…VLMC). A disulfide bridge connects residues Cys-282 and Cys-469. 6 residues coordinate Ca(2+): Asp-289, Ile-291, Asp-333, Ala-335, Ala-383, and Asp-430.

Belongs to the peptidase M10A family. It depends on Ca(2+) as a cofactor. Zn(2+) serves as cofactor. In terms of processing, the proenzyme is activated by removal of the propeptide; this cleavage can be effected by other matrix metalloproteinases and may involve several cleavage steps. Cleavage can also be autocatalytic, after partial maturation by another protease or after treatment with 4-aminophenylmercuric acetate (APMA) (in vitro).

Its subcellular location is the secreted. The protein localises to the extracellular space. It localises to the extracellular matrix. Its function is as follows. Plays a role in the degradation of extracellular matrix proteins including fibrillar collagen, fibronectin, TNC and ACAN. Cleaves several types of triple helical collagen. May also function by activating or degrading key regulatory proteins. Plays a role in wound healing, tissue remodeling, cartilage degradation, bone development, bone mineralization and ossification. This Xenopus laevis (African clawed frog) protein is Collagenase 3 (mmp13).